The primary structure comprises 446 residues: Scytalone dehydratase-like protein Arp1 (446 aa).

Tyr-323 serves as a coordination point for substrate. Residues His-358 and His-383 contribute to the active site. Asn-404 is a substrate binding site.

This sequence belongs to the scytalone dehydratase family. In terms of assembly, homotrimer. Each subunit contains an active site, located in the central part of the hydrophobic core of the monomer, which functions independently.

Its function is as follows. Scytalone dehydratase-like protein; part of the Pks2 gene cluster that mediates the formation of infectious structures (appressoria), enabling these fungi to kill insects faster. The product of the Pks2 gene cluster is different from the one of Pks1 and has still not been identified. This Metarhizium acridum (strain CQMa 102) protein is Scytalone dehydratase-like protein Arp1.